Reading from the N-terminus, the 187-residue chain is ATP synthase subunit delta (187 aa).

The protein belongs to the ATPase delta chain family. F-type ATPases have 2 components, F(1) - the catalytic core - and F(0) - the membrane proton channel. F(1) has five subunits: alpha(3), beta(3), gamma(1), delta(1), epsilon(1). F(0) has three main subunits: a(1), b(2) and c(10-14). The alpha and beta chains form an alternating ring which encloses part of the gamma chain. F(1) is attached to F(0) by a central stalk formed by the gamma and epsilon chains, while a peripheral stalk is formed by the delta and b chains.

The protein localises to the cell membrane. Its function is as follows. F(1)F(0) ATP synthase produces ATP from ADP in the presence of a proton or sodium gradient. F-type ATPases consist of two structural domains, F(1) containing the extramembraneous catalytic core and F(0) containing the membrane proton channel, linked together by a central stalk and a peripheral stalk. During catalysis, ATP synthesis in the catalytic domain of F(1) is coupled via a rotary mechanism of the central stalk subunits to proton translocation. This protein is part of the stalk that links CF(0) to CF(1). It either transmits conformational changes from CF(0) to CF(1) or is implicated in proton conduction. This chain is ATP synthase subunit delta, found in Mesomycoplasma hyopneumoniae (strain J / ATCC 25934 / NCTC 10110) (Mycoplasma hyopneumoniae).